Reading from the N-terminus, the 227-residue chain is Ion-translocating oxidoreductase complex subunit E (227 aa).

Transmembrane regions (helical) follow at residues 34–56, 68–88, 91–111, 127–147, and 181–201; these read AINA…TIIS, IPIY…LLHA, FNLY…CIIV, FFDG…VGSI, and TIIL…LIAI.

The protein belongs to the NqrDE/RnfAE family. The complex is composed of six subunits: RnfA, RnfB, RnfC, RnfD, RnfE and RnfG.

It is found in the cell inner membrane. In terms of biological role, part of a membrane-bound complex that couples electron transfer with translocation of ions across the membrane. This Buchnera aphidicola subsp. Acyrthosiphon pisum (strain APS) (Acyrthosiphon pisum symbiotic bacterium) protein is Ion-translocating oxidoreductase complex subunit E.